Reading from the N-terminus, the 423-residue chain is Histidine--tRNA ligase (423 aa).

It belongs to the class-II aminoacyl-tRNA synthetase family. Homodimer.

The protein localises to the cytoplasm. It carries out the reaction tRNA(His) + L-histidine + ATP = L-histidyl-tRNA(His) + AMP + diphosphate + H(+). In Actinobacillus succinogenes (strain ATCC 55618 / DSM 22257 / CCUG 43843 / 130Z), this protein is Histidine--tRNA ligase.